The sequence spans 55 residues: Large ribosomal subunit protein bL33 (55 aa).

Belongs to the bacterial ribosomal protein bL33 family.

In Bradyrhizobium diazoefficiens (strain JCM 10833 / BCRC 13528 / IAM 13628 / NBRC 14792 / USDA 110), this protein is Large ribosomal subunit protein bL33.